Here is an 86-residue protein sequence, read N- to C-terminus: Envelope glycoprotein N (86 aa).

The first 29 residues, Met-1 to Gly-29, serve as a signal peptide directing secretion. Topologically, residues Glu-30–Leu-47 are virion surface. A helical membrane pass occupies residues Lys-48–Leu-68. Residues Phe-69–Tyr-86 are Intravirion-facing.

The protein belongs to the herpesviridae glycoprotein N family. In terms of assembly, interacts (via N-terminus) with gM (via N-terminus). The gM-gN heterodimer forms the gCII complex.

Its subcellular location is the virion membrane. It localises to the host membrane. The protein resides in the host Golgi apparatus. It is found in the host trans-Golgi network. Functionally, envelope glycoprotein necessary for proper maturation of gM and modulation of its membrane fusion activity. Also plays a critical role in virion morphogenesis. The protein is Envelope glycoprotein N of Homo sapiens (Human).